The primary structure comprises 255 residues: Ribosomal RNA small subunit methyltransferase A (255 aa).

6 residues coordinate S-adenosyl-L-methionine: N12, L14, G39, E60, D84, and N102.

This sequence belongs to the class I-like SAM-binding methyltransferase superfamily. rRNA adenine N(6)-methyltransferase family. RsmA subfamily.

It localises to the cytoplasm. The catalysed reaction is adenosine(1518)/adenosine(1519) in 16S rRNA + 4 S-adenosyl-L-methionine = N(6)-dimethyladenosine(1518)/N(6)-dimethyladenosine(1519) in 16S rRNA + 4 S-adenosyl-L-homocysteine + 4 H(+). Specifically dimethylates two adjacent adenosines (A1518 and A1519) in the loop of a conserved hairpin near the 3'-end of 16S rRNA in the 30S particle. May play a critical role in biogenesis of 30S subunits. The sequence is that of Ribosomal RNA small subunit methyltransferase A from Methylobacillus flagellatus (strain ATCC 51484 / DSM 6875 / VKM B-1610 / KT).